We begin with the raw amino-acid sequence, 532 residues long: Peptide chain release factor 3 (532 aa).

Residues 10–283 (QKRRTFAIIS…GILDWAPSPV (274 aa)) form the tr-type G domain. Residues 19 to 26 (SHPDAGKT), 87 to 91 (DTPGH), and 141 to 144 (NKLD) contribute to the GTP site.

The protein belongs to the TRAFAC class translation factor GTPase superfamily. Classic translation factor GTPase family. PrfC subfamily.

It localises to the cytoplasm. Increases the formation of ribosomal termination complexes and stimulates activities of RF-1 and RF-2. It binds guanine nucleotides and has strong preference for UGA stop codons. It may interact directly with the ribosome. The stimulation of RF-1 and RF-2 is significantly reduced by GTP and GDP, but not by GMP. In Buchnera aphidicola subsp. Baizongia pistaciae (strain Bp), this protein is Peptide chain release factor 3 (prfC).